A 346-amino-acid polypeptide reads, in one-letter code: Putative transmembrane protein ORF346 (346 aa).

6 helical membrane passes run 67–87, 104–124, 134–154, 156–176, 181–201, and 219–241; these read LPII…CIVY, IINP…VGLT, PPYL…SGIY, AIGD…GLFI, IILY…LCLS, and YPFS…LGSY. The tract at residues 294–346 is disordered; sequence SEYPHSENGSGGSGGSGSGSGSGGSGSGGNSGSGGSGSGSSGSGGNSGSGNNG. Residues 302–346 are compositionally biased toward gly residues; that stretch reads GSGGSGGSGSGSGSGGSGSGGNSGSGGSGSGSSGSGGNSGSGNNG.

Its subcellular location is the host membrane. The protein is Putative transmembrane protein ORF346 of Acidianus bottle-shaped virus (isolate Italy/Pozzuoli) (ABV).